A 499-amino-acid chain; its full sequence is GTPase Der (499 aa).

EngA-type G domains follow at residues 3–166 (PVVA…MDEV) and 211–384 (IKLA…DCST). GTP-binding positions include 9-16 (GRPNVGKS), 56-60 (DTGGI), 118-121 (NKTD), 217-224 (GRPNVGKS), 264-268 (DTAGV), and 329-332 (NKWD). The KH-like domain maps to 385–469 (RRVNTSMLTR…PIRIQFKEGD (85 aa)).

Belongs to the TRAFAC class TrmE-Era-EngA-EngB-Septin-like GTPase superfamily. EngA (Der) GTPase family. Associates with the 50S ribosomal subunit.

Its function is as follows. GTPase that plays an essential role in the late steps of ribosome biogenesis. This Erwinia tasmaniensis (strain DSM 17950 / CFBP 7177 / CIP 109463 / NCPPB 4357 / Et1/99) protein is GTPase Der.